Here is a 69-residue protein sequence, read N- to C-terminus: ATP synthase F(0) complex subunit e, mitochondrial (69 aa).

Residue K34 is modified to N6-acetyllysine.

The protein belongs to the ATPase e subunit family. As to quaternary structure, component of the ATP synthase complex composed at least of ATP5F1A/subunit alpha, ATP5F1B/subunit beta, ATP5MC1/subunit c (homooctomer), MT-ATP6/subunit a, MT-ATP8/subunit 8, ATP5ME/subunit e, ATP5MF/subunit f, ATP5MG/subunit g, ATP5MK/subunit k, ATP5MJ/subunit j, ATP5F1C/subunit gamma, ATP5F1D/subunit delta, ATP5F1E/subunit epsilon, ATP5PF/subunit F6, ATP5PB/subunit b, ATP5PD/subunit d, ATP5PO/subunit OSCP. ATP synthase complex consists of a soluble F(1) head domain (subunits alpha(3) and beta(3)) - the catalytic core - and a membrane F(0) domain - the membrane proton channel (subunits c, a, 8, e, f, g, k and j). These two domains are linked by a central stalk (subunits gamma, delta, and epsilon) rotating inside the F1 region and a stationary peripheral stalk (subunits F6, b, d, and OSCP).

The protein resides in the mitochondrion. It localises to the mitochondrion inner membrane. Its function is as follows. Subunit e, of the mitochondrial membrane ATP synthase complex (F(1)F(0) ATP synthase or Complex V) that produces ATP from ADP in the presence of a proton gradient across the membrane which is generated by electron transport complexes of the respiratory chain. ATP synthase complex consist of a soluble F(1) head domain - the catalytic core - and a membrane F(1) domain - the membrane proton channel. These two domains are linked by a central stalk rotating inside the F(1) region and a stationary peripheral stalk. During catalysis, ATP synthesis in the catalytic domain of F(1) is coupled via a rotary mechanism of the central stalk subunits to proton translocation. In vivo, can only synthesize ATP although its ATP hydrolase activity can be activated artificially in vitro. Part of the complex F(0) domain. In Cricetulus longicaudatus (Long-tailed dwarf hamster), this protein is ATP synthase F(0) complex subunit e, mitochondrial.